A 231-amino-acid chain; its full sequence is 7-cyano-7-deazaguanine synthase (231 aa).

Residue 8–18 (FSGGQDSTTCL) participates in ATP binding. Residues C187, C196, C199, and C202 each contribute to the Zn(2+) site.

Belongs to the QueC family. Zn(2+) is required as a cofactor.

It carries out the reaction 7-carboxy-7-deazaguanine + NH4(+) + ATP = 7-cyano-7-deazaguanine + ADP + phosphate + H2O + H(+). It participates in purine metabolism; 7-cyano-7-deazaguanine biosynthesis. Its function is as follows. Catalyzes the ATP-dependent conversion of 7-carboxy-7-deazaguanine (CDG) to 7-cyano-7-deazaguanine (preQ(0)). The protein is 7-cyano-7-deazaguanine synthase of Vibrio vulnificus (strain CMCP6).